We begin with the raw amino-acid sequence, 442 residues long: Thymidine phosphorylase (442 aa).

The protein belongs to the thymidine/pyrimidine-nucleoside phosphorylase family. In terms of assembly, homodimer.

It catalyses the reaction thymidine + phosphate = 2-deoxy-alpha-D-ribose 1-phosphate + thymine. It participates in pyrimidine metabolism; dTMP biosynthesis via salvage pathway; dTMP from thymine: step 1/2. Its function is as follows. The enzymes which catalyze the reversible phosphorolysis of pyrimidine nucleosides are involved in the degradation of these compounds and in their utilization as carbon and energy sources, or in the rescue of pyrimidine bases for nucleotide synthesis. The chain is Thymidine phosphorylase from Pectobacterium atrosepticum (strain SCRI 1043 / ATCC BAA-672) (Erwinia carotovora subsp. atroseptica).